The primary structure comprises 275 residues: Phosphite import ATP-binding protein PxtA (275 aa).

One can recognise an ABC transporter domain in the interval 11 to 252; the sequence is LRVDRLSVVY…QLERIYAGRS (242 aa). 44–51 contributes to the ATP binding site; it reads GLSGAGKS. The tract at residues 251-275 is disordered; the sequence is RSTTQPANAPAEPPVMLEPSLEMSR.

This sequence belongs to the ABC transporter superfamily. Phosphonates importer (TC 3.A.1.9.1) family. In terms of assembly, the complex is composed of two ATP-binding proteins (PtxA), two transmembrane proteins (PtxC) and a solute-binding protein (PtxB).

It localises to the cell inner membrane. The enzyme catalyses phosphite(out) + ATP + H2O = phosphite(in) + ADP + phosphate + H(+). Its function is as follows. Part of the ABC transporter complex PtxABC involved in phosphite import. Responsible for energy coupling to the transport system. This is Phosphite import ATP-binding protein PxtA (ptxA) from Stutzerimonas stutzeri (Pseudomonas stutzeri).